The sequence spans 58 residues: Large ribosomal subunit protein uL30 (58 aa).

This sequence belongs to the universal ribosomal protein uL30 family. Part of the 50S ribosomal subunit.

This Parabacteroides distasonis (strain ATCC 8503 / DSM 20701 / CIP 104284 / JCM 5825 / NCTC 11152) protein is Large ribosomal subunit protein uL30.